The following is a 312-amino-acid chain: Deoxyribonuclease-1-like 1 (312 aa).

The first 35 residues, 1–35 (MPSGQPVFPRRVPDAYIAMRGLVVASLLILLVGGT), serve as a signal peptide directing secretion. N102 is a glycosylation site (N-linked (GlcNAc...) asparagine). E113 is an active-site residue. Residue N133 is glycosylated (N-linked (GlcNAc...) asparagine). H164 is an active-site residue. Cysteines 203 and 240 form a disulfide. N-linked (GlcNAc...) asparagine glycosylation is present at N239.

This sequence belongs to the DNase I family.

Its subcellular location is the endoplasmic reticulum. The protein is Deoxyribonuclease-1-like 1 (Dnase1l1) of Rattus norvegicus (Rat).